Reading from the N-terminus, the 247-residue chain is Probable 2-phosphosulfolactate phosphatase (247 aa).

The protein belongs to the ComB family. It depends on Mg(2+) as a cofactor.

It catalyses the reaction (2R)-O-phospho-3-sulfolactate + H2O = (2R)-3-sulfolactate + phosphate. This Clostridium perfringens (strain 13 / Type A) protein is Probable 2-phosphosulfolactate phosphatase.